A 121-amino-acid polypeptide reads, in one-letter code: Small ribosomal subunit protein uS13 (121 aa).

The disordered stretch occupies residues 91-121; that stretch reads HRRGLPVRGQNSKNNARTRKGPRRTVANKKK. The span at 106-121 shows a compositional bias: basic residues; sequence ARTRKGPRRTVANKKK.

Belongs to the universal ribosomal protein uS13 family. Part of the 30S ribosomal subunit. Forms a loose heterodimer with protein S19. Forms two bridges to the 50S subunit in the 70S ribosome.

In terms of biological role, located at the top of the head of the 30S subunit, it contacts several helices of the 16S rRNA. In the 70S ribosome it contacts the 23S rRNA (bridge B1a) and protein L5 of the 50S subunit (bridge B1b), connecting the 2 subunits; these bridges are implicated in subunit movement. Contacts the tRNAs in the A and P-sites. The protein is Small ribosomal subunit protein uS13 of Bacillus cereus (strain ZK / E33L).